The sequence spans 165 residues: Probable chemoreceptor glutamine deamidase CheD (165 aa).

It belongs to the CheD family.

It catalyses the reaction L-glutaminyl-[protein] + H2O = L-glutamyl-[protein] + NH4(+). Its function is as follows. Probably deamidates glutamine residues to glutamate on methyl-accepting chemotaxis receptors (MCPs), playing an important role in chemotaxis. The protein is Probable chemoreceptor glutamine deamidase CheD of Clostridium tetani (strain Massachusetts / E88).